Reading from the N-terminus, the 155-residue chain is FAD synthase (155 aa).

ATP is bound by residues 9 to 10, 14 to 17, and Asp92; these read TF and HPGH.

This sequence belongs to the archaeal FAD synthase family. Homodimer. The cofactor is a divalent metal cation.

It catalyses the reaction FMN + ATP + H(+) = FAD + diphosphate. Its pathway is cofactor biosynthesis; FAD biosynthesis; FAD from FMN: step 1/1. Functionally, catalyzes the transfer of the AMP portion of ATP to flavin mononucleotide (FMN) to produce flavin adenine dinucleotide (FAD) coenzyme. This is FAD synthase from Archaeoglobus profundus (strain DSM 5631 / JCM 9629 / NBRC 100127 / Av18).